A 265-amino-acid chain; its full sequence is Tryptophan synthase alpha chain (265 aa).

Active-site proton acceptor residues include Glu49 and Asp60.

It belongs to the TrpA family. Tetramer of two alpha and two beta chains.

It carries out the reaction (1S,2R)-1-C-(indol-3-yl)glycerol 3-phosphate + L-serine = D-glyceraldehyde 3-phosphate + L-tryptophan + H2O. The protein operates within amino-acid biosynthesis; L-tryptophan biosynthesis; L-tryptophan from chorismate: step 5/5. Functionally, the alpha subunit is responsible for the aldol cleavage of indoleglycerol phosphate to indole and glyceraldehyde 3-phosphate. This is Tryptophan synthase alpha chain from Polynucleobacter necessarius subsp. necessarius (strain STIR1).